We begin with the raw amino-acid sequence, 37 residues long: Large ribosomal subunit protein bL36 (37 aa).

Belongs to the bacterial ribosomal protein bL36 family.

In Desulforudis audaxviator (strain MP104C), this protein is Large ribosomal subunit protein bL36.